A 1333-amino-acid chain; its full sequence is MTADKLVFFVNGRKVVEKNADPETTLLAYLRRKLGLSGTKLGCGEGGCGACTVMLSKYDRLQNKIVHFSANACLAPICSLHHVAVTTVEGIGSTKTRLHPVQERIAKSHGSQCGFCTPGIVMSMYTLLRNQPEPTMEEIENAFQGNLCRCTGYRPILQGFRTFARDGGCCGGDGNNPNCCMNQKKDHSVSLSPSLFKPEEFTPLDPTQEPIFPPELLRLKDTPRKQLRFEGERVTWIQASTLKELLDLKAQHPDAKLVVGNTEIGIEMKFKNMLFPMIVCPAWIPELNSVEHGPDGISFGAACPLSIVEKTLVDAVAKLPAQKTEVFRGVLEQLRWFAGKQVKSVASVGGNIITASPISDLNPVFMASGAKLTLVSRGTRRTVQMDHTFFPGYRKTLLSPEEILLSIEIPYSREGEYFSAFKQASRREDDIAKVTSGMRVLFKPGTTEVQELALCYGGMANRTISALKTTQRQLSKLWKEELLQDVCAGLAEELHLPPDAPGGMVDFRCTLTLSFFFKFYLTVLQKLGQENLEDKCGKLDPTFASATLLFQKDPPADVQLFQEVPKGQSEEDMVGRPLPHLAADMQASGEAVYCDDIPRYENELSLRLVTSTRAHAKIKSIDTSEAKKVPGFVCFISADDVPGSNITGICNDETVFAKDKVTCVGHIIGAVVADTPEHTQRAAQGVKITYEELPAIITIEDAIKNNSFYGPELKIEKGDLKKGFSEADNVVSGEIYIGGQEHFYLETHCTIAVPKGEAGEMELFVSTQNTMKTQSFVAKMLGVPANRIVVRVKRMGGGFGGKETRSTVVSTAVALAAYKTGRPVRCMLDRDEDMLITGGRHPFLARYKVGFMKTGTVVALEVDHFSNVGNTQDLSQSIMERALFHMDNCYKIPNIRGTGRLCKTNLPSNTAFRGFGGPQGMLIAECWMSEVAVTCGMPAEEVRRKNLYKEGDLTHFNQKLEGFTLPRCWEECLASSQYHARKSEVDKFNKENCWKKRGLCIIPTKFGISFTVPFLNQAGALLHVYTDGSVLLTHGGTEMGQGLHTKMVQVASRALKIPTSKIYISETSTNTVPNTSPTAASVSADLNGQAVYAACQTILKRLEPYKKKNPSGSWEDWVTAAYMDTVSLSATGFYRTPNLGYSFETNSGNPFHYFSYGVACSEVEIDCLTGDHKNLRTDIVMDVGSSLNPAIDIGQVEGAFVQGLGLFTLEELHYSPEGSLHTRGPSTYKIPAFGSIPIEFRVSLLRDCPNKKAIYASKAVGEPPLFLAASIFFAIKDAIRAARAQHTGNNVKELFRLDSPATPEKIRNACVDKFTTLCVTGVPENCKPWSVRV.

In terms of domain architecture, 2Fe-2S ferredoxin-type spans 4-91; it reads DKLVFFVNGR…HVAVTTVEGI (88 aa). Residues Cys43, Cys48, Cys51, Cys73, Cys113, Cys116, Cys148, and Cys150 each contribute to the [2Fe-2S] cluster site. Residues 229-414 enclose the FAD-binding PCMH-type domain; that stretch reads FEGERVTWIQ…LSIEIPYSRE (186 aa). FAD is bound by residues 257–264, Phe337, 347–351, Asp360, Leu404, and Lys422; these read LVVGNTEI and SVGGN. Intrachain disulfides connect Cys509–Cys1318 and Cys536–Cys993. 2 residues coordinate Mo-molybdopterin: Gln768 and Phe799. Positions 803 and 881 each coordinate substrate. Arg913 contributes to the Mo-molybdopterin binding site. Positions 915 and 1011 each coordinate substrate. Ala1080 provides a ligand contact to Mo-molybdopterin. Glu1262 (proton acceptor) is an active-site residue.

The protein belongs to the xanthine dehydrogenase family. In terms of assembly, homodimer. Interacts with BTN1A1. It depends on [2Fe-2S] cluster as a cofactor. FAD serves as cofactor. Requires Mo-molybdopterin as cofactor. Post-translationally, subject to partial proteolysis; this alters the enzyme from the dehydrogenase form (D) to the oxidase form (O). Contains sulfhydryl groups that are easily oxidized (in vitro); this alters the enzyme from the dehydrogenase form (D) to the oxidase form (O). As to expression, detected in milk (at protein level).

It localises to the cytoplasm. Its subcellular location is the peroxisome. The protein resides in the secreted. It catalyses the reaction xanthine + NAD(+) + H2O = urate + NADH + H(+). The catalysed reaction is hypoxanthine + NAD(+) + H2O = xanthine + NADH + H(+). The enzyme catalyses xanthine + O2 + H2O = urate + H2O2. Its activity is regulated as follows. Can be converted from the dehydrogenase form (D) to the oxidase form (O) irreversibly by proteolysis or reversibly through the oxidation of sulfhydryl groups. Key enzyme in purine degradation. Catalyzes the oxidation of hypoxanthine to xanthine. Catalyzes the oxidation of xanthine to uric acid. Contributes to the generation of reactive oxygen species. Has also low oxidase activity towards aldehydes (in vitro). The sequence is that of Xanthine dehydrogenase/oxidase (XDH) from Homo sapiens (Human).